The primary structure comprises 336 residues: F420-dependent glucose-6-phosphate dehydrogenase (336 aa).

Asp-39 lines the coenzyme F420-(gamma-Glu)n pocket. His-40 (proton donor) is an active-site residue. Coenzyme F420-(gamma-Glu)n-binding positions include Thr-76 and 107-108; that span reads TG. Glu-109 serves as the catalytic Proton acceptor. Residues Asn-112, 177-178, and 180-181 contribute to the coenzyme F420-(gamma-Glu)n site; these read GG and AV. Residues Thr-195, Lys-198, Lys-259, and Arg-283 each contribute to the substrate site.

This sequence belongs to the F420-dependent glucose-6-phosphate dehydrogenase family. Homodimer.

The enzyme catalyses oxidized coenzyme F420-(gamma-L-Glu)(n) + D-glucose 6-phosphate + H(+) = 6-phospho-D-glucono-1,5-lactone + reduced coenzyme F420-(gamma-L-Glu)(n). In terms of biological role, catalyzes the coenzyme F420-dependent oxidation of glucose 6-phosphate (G6P) to 6-phosphogluconolactone. Appears to have a role in resistance to oxidative stress, via its consumption of G6P that serves as a source of reducing power to combat oxidative stress in mycobacteria. More precisely, is likely involved in a F420-dependent anti-oxidant mechanism that protects M.tuberculosis against oxidative stress and bactericidal agents. Is essential for the bioreductive activation of the bicyclic 4-nitroimidazole prodrug PA-824 (nitroimidazo-oxazine) developed for anti-tuberculosis therapy against both replicating and persistent bacteria. It does not interact directly with PA-824 but, rather, provides reduced F420 to the deazaflavin-dependent nitroreductase Ddn, which in turn activates PA-824. This is F420-dependent glucose-6-phosphate dehydrogenase (fgd1) from Mycobacterium tuberculosis (strain CDC 1551 / Oshkosh).